The sequence spans 448 residues: MLWLALGPFCAMENQVLVIRIKIPNSGAVDWTVHSGPQLLFRDVLDVIGQVLPEATTTAFEYEDEDGDRITVRSDEEMKAMLSYYYSTVMEQQVNGQLIEPLQIFPRACKPPGERNIHGLKVNTRAGPSQHTSPVVSDSLPSNSLKKSSAELRKILANGQMNEQDIRYRDTLGHGNGGTVYKAHHVPSGKILAVKVILLDITLELQKQIMSELEILYKCDSSYIIGFYGAFFVENRISICTEFMDGGSLDVYRKIPEHVLGRIAVAVVKGLTYLWSLKILHRDVKPSNMLVNTGGQVKLCDFGVSTQLVNSIAKTYVGTNAYMAPERISGEQYGIHSDVWSLGISFMELALGRFPYPQIQKNQGSLMPLQLLQCIVDEDSPVLPLGEFSEPFVHFITQCMRKQPKERPAPEELMGHPFIVQFNDGNSTVVSMWVCRALEERRSQQGPP.

Residues 18 to 25 form an interaction with MAPK7 region; the sequence is VIRIKIPN. The region spanning 18–109 is the PB1 domain; that stretch reads VIRIKIPNSG…EPLQIFPRAC (92 aa). The tract at residues 64-68 is interaction with MAP3K2/MAP3K3; the sequence is DEDGD. Positions 116–144 are disordered; it reads NIHGLKVNTRAGPSQHTSPVVSDSLPSNS. Positions 117-131 are interaction with MAPK7; it reads IHGLKVNTRAGPSQH. Over residues 126-144 the composition is skewed to polar residues; it reads AGPSQHTSPVVSDSLPSNS. In terms of domain architecture, Protein kinase spans 166–419; that stretch reads IRYRDTLGHG…PEELMGHPFI (254 aa). Residues 172 to 180 and K195 contribute to the ATP site; that span reads LGHGNGGTV. The active-site Proton acceptor is D283. Phosphoserine is present on S311. A Phosphothreonine modification is found at T315.

It belongs to the protein kinase superfamily. STE Ser/Thr protein kinase family. MAP kinase kinase subfamily. Interacts with PARD6A, MAP3K3 and MAPK7. Forms a complex with SQSTM1 and PRKCZ or PRKCI. Requires Mg(2+) as cofactor. Post-translationally, activated by phosphorylation on Ser/Thr by MAP kinase kinase kinases.

It localises to the cytoplasm. The catalysed reaction is L-seryl-[protein] + ATP = O-phospho-L-seryl-[protein] + ADP + H(+). It catalyses the reaction L-threonyl-[protein] + ATP = O-phospho-L-threonyl-[protein] + ADP + H(+). It carries out the reaction L-tyrosyl-[protein] + ATP = O-phospho-L-tyrosyl-[protein] + ADP + H(+). Functionally, acts as a scaffold for the formation of a ternary MAP3K2/MAP3K3-MAP3K5-MAPK7 signaling complex. Activation of this pathway appears to play a critical role in protecting cells from stress-induced apoptosis, neuronal survival and cardiac development and angiogenesis. As part of the MAPK/ERK signaling pathway, acts as a negative regulator of apoptosis in cardiomyocytes via promotion of STUB1/CHIP-mediated ubiquitination and degradation of ICER-type isoforms of CREM. The sequence is that of Dual specificity mitogen-activated protein kinase kinase 5 (Map2k5) from Mus musculus (Mouse).